The primary structure comprises 346 residues: Galanin receptor type 1 (346 aa).

The Extracellular segment spans residues 1-33 (MELAPVNLSEGNGSDPEPPAEPRPLFGIGVENF). 2 N-linked (GlcNAc...) asparagine glycosylation sites follow: asparagine 7 and asparagine 12. A helical transmembrane segment spans residues 34–54 (ITLVVFGLIFAMGVLGNSLVI). The Cytoplasmic segment spans residues 55 to 69 (TVLARSKPGKPRSTT). A helical membrane pass occupies residues 70–90 (NLFILNLSIADLAYLLFCIPF). Over 91–108 (QATVYALPTWVLGAFICK) the chain is Extracellular. Cysteine 107 and cysteine 185 are oxidised to a cystine. The chain crosses the membrane as a helical span at residues 109 to 130 (FIHYFFTVSMLVSIFTLAAMSV). The Cytoplasmic portion of the chain corresponds to 131-150 (DRYVAIVHSRRSSSLRVSRN). Residues 151–171 (ALLGVGFIWALSIAMASPVAY) form a helical membrane-spanning segment. Over 172–196 (YQRLFHRDSNQTFCWEHWPNQLHKK) the chain is Extracellular. An N-linked (GlcNAc...) asparagine glycan is attached at asparagine 181. A helical membrane pass occupies residues 197–217 (AYVVCTFVFGYLLPLLLICFC). Residues 218–246 (YAKVLNHLHKKLKNMSKKSEASKKKTAQT) lie on the Cytoplasmic side of the membrane. Residues 247 to 267 (VLVVVVVFGISWLPHHVIHLW) form a helical membrane-spanning segment. The Extracellular segment spans residues 268-269 (AE). The helical transmembrane segment at 270–290 (FGAFPLTPASFFFRITAHCLA) threads the bilayer. Residues 291 to 346 (YSNSSVNPIIYAFLSENFRKAYKQVFKCRVCNESPHGDAKEKNRIDTPPSTNCTHV) lie on the Cytoplasmic side of the membrane. Cysteine 318 carries S-palmitoyl cysteine lipidation. A compositionally biased stretch (basic and acidic residues) spans 326–335 (HGDAKEKNRI). The interval 326-346 (HGDAKEKNRIDTPPSTNCTHV) is disordered.

It belongs to the G-protein coupled receptor 1 family. In terms of assembly, interacts with GRP39 AND HTR1A. Post-translationally, three cysteine residues are found in the C-terminus, at least one of which may be palmitoylated. Spinal cord, small intestine, Rin14B insulinoma cells and several brain regions, particularly ventral hippocampus, amygdala, supraoptic nucleus, hypothalamus, thalamus, lateral parabrachial nucleus and locus coeruleus.

It localises to the cell membrane. Receptor for the hormone galanin. The activity of this receptor is mediated by G proteins that inhibit adenylate cyclase activity. In Rattus norvegicus (Rat), this protein is Galanin receptor type 1 (Galr1).